The primary structure comprises 258 residues: Zinc import ATP-binding protein ZnuC (258 aa).

The ABC transporter domain occupies Ile-7–Gly-233. Position 39–46 (Gly-39–Ser-46) interacts with ATP.

Belongs to the ABC transporter superfamily. Zinc importer (TC 3.A.1.15.5) family. In terms of assembly, the complex is composed of two ATP-binding proteins (ZnuC), two transmembrane proteins (ZnuB) and a solute-binding protein (ZnuA).

The protein resides in the cell inner membrane. It carries out the reaction Zn(2+)(out) + ATP(in) + H2O(in) = Zn(2+)(in) + ADP(in) + phosphate(in) + H(+)(in). In terms of biological role, part of the ABC transporter complex ZnuABC involved in zinc import. Responsible for energy coupling to the transport system. The polypeptide is Zinc import ATP-binding protein ZnuC (Hydrogenovibrio crunogenus (strain DSM 25203 / XCL-2) (Thiomicrospira crunogena)).